A 90-amino-acid polypeptide reads, in one-letter code: Probable Fe(2+)-trafficking protein (90 aa).

This sequence belongs to the Fe(2+)-trafficking protein family. As to quaternary structure, monomer.

Could be a mediator in iron transactions between iron acquisition and iron-requiring processes, such as synthesis and/or repair of Fe-S clusters in biosynthetic enzymes. The sequence is that of Probable Fe(2+)-trafficking protein from Enterobacter sp. (strain 638).